We begin with the raw amino-acid sequence, 320 residues long: MKTEASPGRLHEDVKLIFDKKAPSGRSSSCSSSSSSSSGSSYSSSRGSRSSRRSRTSSSSRSSSSGSSSSSNSRSRSRPRCSGRVHCRHRHRSPPRRYRARSRSYSPSPESSSRRRHYYRRSRSPYRYSRRYRRSPSRSRSRSPPHWRGSRFIGRYRCRFSQSPRRSPRPYRSRSRSRERSIRLSLEEKKYLLNVAKANAARILGVQNLELPESLKEMEQQEERKRRSSSDEEERVRVDLAAQKTPAQVNGGAADDEAETAQTSPKRKQIVFSNNNAIAKPSSSPTLSDSKVTSRADIVPYKRPFGQWVPIGKSSSANKR.

Residues 1-22 show a composition bias toward basic and acidic residues; the sequence is MKTEASPGRLHEDVKLIFDKKA. 2 disordered regions span residues 1–180 and 215–299; these read MKTE…SRER and LKEM…ADIV. Composition is skewed to low complexity over residues 24–48 and 56–74; these read SGRS…SRGS and TSSS…SNSR. Basic residues-rich tracts occupy residues 75–102, 114–158, and 166–175; these read SRSR…RARS, RRRH…RYRC, and RSPRPYRSRS. Phosphoserine is present on residues serine 135 and serine 137. Residues 215-238 show a composition bias toward basic and acidic residues; that stretch reads LKEMEQQEERKRRSSSDEEERVRV. Residues 271-293 show a composition bias toward polar residues; the sequence is VFSNNNAIAKPSSSPTLSDSKVT.

The protein belongs to the RSRP family. Post-translationally, phosphorylated. Phosphorylation at Ser-135 and Ser-137 mediates the interaction with spliceosome proteins.

It is found in the nucleus. Functionally, probably acts as a spliceosomal factor that contributes to spliceosome assembly and regulates the isoform switching of proteins such as PARP6. This chain is Arginine/serine-rich protein 1 (rsrp1), found in Danio rerio (Zebrafish).